The sequence spans 483 residues: Regulatory protein ViaA (483 aa).

The protein belongs to the ViaA family. In terms of assembly, homodimer. Interacts with RavA.

The protein localises to the cytoplasm. Functionally, component of the RavA-ViaA chaperone complex, which may act on the membrane to optimize the function of some of the respiratory chains. ViaA stimulates the ATPase activity of RavA. In Enterobacter sp. (strain 638), this protein is Regulatory protein ViaA.